A 110-amino-acid chain; its full sequence is U1-lycotoxin-Ls1jj (110 aa).

The signal sequence occupies residues 1 to 20 (MKFVLLFGVLLVTLFSYSSA). Positions 21–44 (EMLDDFDQADEDELLSLIEKEEAR) are excised as a propeptide. Disulfide bonds link Cys47–Cys62, Cys54–Cys71, Cys61–Cys89, and Cys73–Cys87.

This sequence belongs to the neurotoxin 19 (CSTX) family. 03 subfamily. Expressed by the venom gland.

The protein resides in the secreted. The sequence is that of U1-lycotoxin-Ls1jj from Lycosa singoriensis (Wolf spider).